The sequence spans 925 residues: MTTEQRRSLQAFQDYIRKTLDPTYILSYMAPWFREEEVQYIQAEKNNKGPMEAATLFLKFLLELQEEGWFRGFLDALDHAGYSGLYEAIESWDFKKIEKLEEYRLLLKRLQPEFKTRIIPTDIISDLSECLINQECEEILQICSTKGMMAGAEKLVECLLRSDKENWPKTLKLALEKERNKFSELWIVEKGIKDVETEDLEDKMETSDIQIFYQEDPECQNLSENSCPPSEVSDTNLYSPFKPRNYQLELALPAMKGKNTIICAPTGCGKTFVSLLICEHHLKKFPQGQKGKVVFFANQIPVYEQQKSVFSKYFERHGYRVTGISGATAENVPVEQIVENNDIIILTPQILVNNLKKGTIPSLSIFTLMIFDECHNTSKQHPYNMIMFNYLDQKLGGSSGPLPQVIGLTASVGVGDAKNTDEALDYICKLCASLDASVIATVKHNLEELEQVVYKPQKFFRKVESRISDKFKYIIAQLMRDTESLAKRICKDLENLSQIQNREFGTQKYEQWIVTVQKACMVFQMPDKDEESRICKALFLYTSHLRKYNDALIISEHARMKDALDYLKDFFSNVRAAGFDEIEQDLTQRFEEKLQELESVSRDPSNENPKLEDLCFILQEEYHLNPETITILFVKTRALVDALKNWIEGNPKLSFLKPGILTGRGKTNQNTGMTLPAQKCILDAFKASGDHNILIATSVADEGIDIAQCNLVILYEYVGNVIKMIQTRGRGRARGSKCFLLTSNAGVIEKEQINMYKEKMMNDSILRLQTWDEAVFREKILHIQTHEKFIRDSQEKPKPVPDKENKKLLCRKCKALACYTADVRVIEECHYTVLGDAFKECFVSRPHPKPKQFSSFEKRAKIFCARQNCSHDWGIHVKYKTFEIPVIKIESFVVEDIATGVQTLYSKWKDFHFEKIPFDPAEMSK.

2 CARD domains span residues 1-87 and 92-172; these read MTTE…GLYE and WDFK…KTLK. Position 8 is a (Microbial infection) Phosphoserine (Ser-8). Ser-8 carries the phosphoserine modification. Residues Lys-48, Lys-96, Lys-154, and Lys-164 each participate in a glycyl lysine isopeptide (Lys-Gly) (interchain with G-Cter in ubiquitin) cross-link. Residue Thr-170 is modified to Phosphothreonine. Glycyl lysine isopeptide (Lys-Gly) (interchain with G-Cter in ubiquitin) cross-links involve residues Lys-172, Lys-181, Lys-193, and Lys-203. An interaction with ZC3HAV1 region spans residues 218-925; sequence ECQNLSENSC…IPFDPAEMSK (708 aa). The Helicase ATP-binding domain occupies 251–430; that stretch reads ALPAMKGKNT…DEALDYICKL (180 aa). 264–271 provides a ligand contact to ATP; that stretch reads APTGCGKT. The short motif at 372 to 375 is the DECH box element; that stretch reads DECH. (Microbial infection) Deamidated asparagine; by herpes simplex virus 1/HHV-1 UL37 is present on residues Asn-495 and Asn-549. The Helicase C-terminal domain maps to 610-776; that stretch reads KLEDLCFILQ…RLQTWDEAVF (167 aa). A mediates interaction with RNF135 region spans residues 735 to 925; that stretch reads GSKCFLLTSN…IPFDPAEMSK (191 aa). At Thr-770 the chain carries Phosphothreonine; by CK2. Residues 794–925 form the RLR CTR domain; the sequence is QEKPKPVPDK…IPFDPAEMSK (132 aa). Cys-810 contacts Zn(2+). A Glycyl lysine isopeptide (Lys-Gly) (interchain with G-Cter in ubiquitin) cross-link involves residue Lys-812. Residue Cys-813 participates in Zn(2+) binding. Phosphoserine; by CK2 occurs at positions 854 and 855. N6-acetyllysine is present on Lys-858. Residues Cys-864 and Cys-869 each coordinate Zn(2+). The residue at position 909 (Lys-909) is an N6-acetyllysine.

Belongs to the helicase family. RLR subfamily. Monomer; maintained as a monomer in an autoinhibited state. Upon binding of viral RNAs and conformational shift, homooligomerizes and forms filaments on these molecules. Interacts (via tandem CARD domain) with MAVS/IPS1 promoting its filamentation. Interacts with DHX58/LGP2, IKBKE, TBK1 and STING1. Interacts (via CARD domain) with TRIM25 (via SPRY domain). Interacts (double-stranded RNA-bound oligomeric form) with RNF135 (homodimer); involved in RNA length-dependent activation of the RIG-I signaling pathway. Interacts with CYLD. Interacts with NLRC5; blocks the interaction of MAVS/IPS1 to RIGI. Interacts with SRC. Interacts with DDX60. Interacts with isoform 2 of ZC3HAV1 (via zinc-fingers) in an RNA-dependent manner. Interacts (via tandem CARD domain) with SEC14L1; the interaction is direct and impairs the interaction of RIGI with MAVS/IPS1. Interacts with VCP/p97; interaction is direct and allows the recruitment of RNF125 and subsequent ubiquitination and degradation. Interacts with NOP53; may regulate RIGI through USP15-mediated 'Lys-63'-linked deubiquitination. Interacts with SIGLEC10, CBL and PTPN11; within a negative feedback loop leading to RIGI degradation. Interacts with LRRC25. Interacts with ZCCHC3; leading to activation of RIGI. Interacts with RNF123. Interacts with UBE2D3 and UBE2N; E2 ubiquitin ligases involved in RNF135-mediated ubiquitination of RIGI and activation of the RIG-I signaling pathway. Interacts with IFIT3. Interacts with DDX3X. Interacts with RTN3. Interacts with ARL16; this interaction is GTP-dependent and induced upon viral infection; this interaction suppresses the RNA sensing activity of RIGI. Interacts with DHX16; this interaction enhances RIGI-mediated antiviral response. Interacts with IRGM; promoting RIGI degradation. Interacts with IFI6; this interaction inhibits RIGI activation. Interacts with ECSIT; this interaction bridges RIGI to the MAVS complex at the mitochondrion. Interacts with YWHAE; this interaction drives RIGI at the mitochondrion. As to quaternary structure, (Microbial infection) Interacts with protein Z of Guanarito virus, Machupo virus, Junin arenavirus and Sabia virus. This interaction disrupts its interaction with MAVS/IPS1, impeding downstream IRF3 and NF-kappa-B activation and resulting in decreased IFN-beta induction. In terms of assembly, (Microbial infection) Interacts (via CARD domain) with Human respiratory syncytial virus A non-structural protein 2 (NS2) and this interaction disrupts its interaction with MAVS/IPS1, impeding downstream IRF3 activation. (Microbial infection) Interacts with Rotavirus A non-structural protein 1 (NSP1) and this interaction induces down-regulation of RIGI. As to quaternary structure, (Microbial infection) Interacts with paramyxoviruses (Sendai virus, Nipah virus, Measles virus and Parainfluenza virus 5) protein V; this interaction inhibits TRIM25-mediated ubiquitination of RIG-I and prevents downstream RIG-I signaling thereby inhibiting the IFN responses. In terms of assembly, (Microbial infection) Interacts with herpes simplex virus 1 protein US11; this interaction prevents the interaction of MAVS/IPS1 to RIGI. (Microbial infection) Interacts with herpes simplex virus 1 protein UL37; this interaction deaminates RIGI and inhibits its activation. As to quaternary structure, (Microbial infection) Interacts with Severe fever with thrombocytopenia virus (SFTSV) NSs; this interaction this interaction sequesters RIGI in NSs-induced cytoplasmic inclusion bodies thereby inhibiting the IFN responses. Post-translationally, phosphorylated in resting cells and dephosphorylated in RNA virus-infected cells. Phosphorylation at Thr-770, Ser-854 and Ser-855 results in inhibition of its activity while dephosphorylation at these sites results in its activation. In terms of processing, ubiquitinated. 'Lys-63' ubiquitination by RNF135, which occurs after RNA-binding and homodimerization, releases the autoinhibition of the CARD domains by the RLR CTR domain, an essential step in the activation of the RIG-I signaling pathway. Lys-172 is the critical site of ubiquitination for MAVS/IPS1 binding and to induce anti-viral signal transduction. Lys-154, Lys-164 and Lys-172 are shared sites for RNF135-mediated and TRIM4-mediated ubiquitination. Also undergoes 'Lys-48' ubiquitination at Lys-181 by RNF125 that leads to proteasomal degradation. 'Lys-48' ubiquitination follows viral infection and is enhanced by 'Lys-63'-linked ubiquitination of the CARD domains that promotes interaction with VCP/p97 and subsequent recruitment of RNF125. Within a negative feedback loop involving SIGLEC10 and PTPN11, 'Lys-48' ubiquitination at Lys-812 by CBL also elicits the proteasomal degradation of RIGI. Deubiquitinated by CYLD, a protease that selectively cleaves 'Lys-63'-linked ubiquitin chains. Also probably deubiquitinated by USP17L2/USP17 that cleaves 'Lys-48'- and 'Lys-63'-linked ubiquitin chains and positively regulates the receptor. Ubiquitinated by TRIM40 via 'Lys-48'-linked ubiquitination; leading to proteasomal degradation. Deubiquitinated by USP27X that cleaves 'Lys-63'-linked ubiquitin chains and inhibits the innate immune receptor activity. Deubiquitinated by USP3 that also cleaves 'Lys-63'-linked ubiquitin chains and inhibits the innate immune receptor activity. Undergoes 'Lys-48'-linked ubiquitination catalyzed by MARCHF5 at Lys-193 and Lys-203, leading to proteasomal degradation. Phosphorylated at Ser-8 and Thr-170; these phosphorylations suppresse the TRIM25-mediated 'Lys-63'-linked ubiquitination of RIG-I and thereby prevents RIG-I downstream signaling. Dephosphorylated by phosphatases PPP1CA/PPP1CC; this step is essential to activate RIGI and initiate downstream signaling. Post-translationally, ISGylated. Conjugated to ubiquitin-like protein ISG15 upon IFN-beta stimulation. ISGylation negatively regulates its function in antiviral signaling response. In terms of processing, sumoylated, probably by MUL1; inhibiting its polyubiquitination. Acetylated in response to RNA virus infection. Deacetylated by HDAC6 in the presence of viral mRNAs which is required for detection of viral RNA by RIGI. Post-translationally, (Microbial infection) Deamidated on Asn-495 and Asn-549 by herpes simplex virus 1 protein UL37. These modifications eliminate RIGI detection of viral RNA and restriction of viral replication. In terms of processing, degraded via selective autophagy following interaction with IRGM. IRGM promotes RIGI recruitment to autophagosome membranes, promoting its SQSTM1/p62-dependent autophagic degradation. (Microbial infection) Cleaved by the protease 3C of coxsackievirus B3, poliovirus and enterovirus 71 allowing the virus to disrupt the host type I interferon production. Post-translationally, (Microbial infection) Phosphorylated at Ser-8 by herpes simplex virus 1 protein US3 leading to inhibition of critical RIGI activation steps. As to expression, present in vascular smooth cells (at protein level).

It localises to the cytoplasm. The protein resides in the cell projection. The protein localises to the ruffle membrane. Its subcellular location is the cytoskeleton. It is found in the cell junction. It localises to the tight junction. It catalyses the reaction ATP + H2O = ADP + phosphate + H(+). In terms of biological role, innate immune receptor that senses cytoplasmic viral nucleic acids and activates a downstream signaling cascade leading to the production of type I interferons and pro-inflammatory cytokines. Forms a ribonucleoprotein complex with viral RNAs on which it homooligomerizes to form filaments. The homooligomerization allows the recruitment of RNF135 an E3 ubiquitin-protein ligase that activates and amplifies the RIG-I-mediated antiviral signaling in an RNA length-dependent manner through ubiquitination-dependent and -independent mechanisms. Upon activation, associates with mitochondria antiviral signaling protein (MAVS/IPS1) that activates the IKK-related kinases TBK1 and IKBKE which in turn phosphorylate the interferon regulatory factors IRF3 and IRF7, activating transcription of antiviral immunological genes including the IFN-alpha and IFN-beta interferons. Ligands include 5'-triphosphorylated ssRNAs and dsRNAs but also short dsRNAs (&lt;1 kb in length). In addition to the 5'-triphosphate moiety, blunt-end base pairing at the 5'-end of the RNA is very essential. Overhangs at the non-triphosphorylated end of the dsRNA RNA have no major impact on its activity. A 3'overhang at the 5'triphosphate end decreases and any 5'overhang at the 5' triphosphate end abolishes its activity. Detects both positive and negative strand RNA viruses including members of the families Paramyxoviridae: Human respiratory syncytial virus and measles virus (MeV), Rhabdoviridae: vesicular stomatitis virus (VSV), Orthomyxoviridae: influenza A and B virus, Flaviviridae: Japanese encephalitis virus (JEV), hepatitis C virus (HCV), dengue virus (DENV) and west Nile virus (WNV). It also detects rotaviruses and reoviruses. Detects and binds to SARS-CoV-2 RNAs which is inhibited by m6A RNA modifications. Also involved in antiviral signaling in response to viruses containing a dsDNA genome such as Epstein-Barr virus (EBV). Detects dsRNA produced from non-self dsDNA by RNA polymerase III, such as Epstein-Barr virus-encoded RNAs (EBERs). May play important roles in granulocyte production and differentiation, bacterial phagocytosis and in the regulation of cell migration. The chain is Antiviral innate immune response receptor RIG-I from Homo sapiens (Human).